The sequence spans 277 residues: Release factor glutamine methyltransferase (277 aa).

Residues 120–124 (GTGSG), Asp-143, Trp-171, and Asn-186 each bind S-adenosyl-L-methionine. Residue 186-189 (NPPY) coordinates substrate.

It belongs to the protein N5-glutamine methyltransferase family. PrmC subfamily.

It catalyses the reaction L-glutaminyl-[peptide chain release factor] + S-adenosyl-L-methionine = N(5)-methyl-L-glutaminyl-[peptide chain release factor] + S-adenosyl-L-homocysteine + H(+). In terms of biological role, methylates the class 1 translation termination release factors RF1/PrfA and RF2/PrfB on the glutamine residue of the universally conserved GGQ motif. This is Release factor glutamine methyltransferase from Coxiella burnetii (strain RSA 493 / Nine Mile phase I).